A 136-amino-acid chain; its full sequence is Ribosome-binding factor A (136 aa).

This sequence belongs to the RbfA family. In terms of assembly, monomer. Binds 30S ribosomal subunits, but not 50S ribosomal subunits or 70S ribosomes.

It is found in the cytoplasm. One of several proteins that assist in the late maturation steps of the functional core of the 30S ribosomal subunit. Associates with free 30S ribosomal subunits (but not with 30S subunits that are part of 70S ribosomes or polysomes). Required for efficient processing of 16S rRNA. May interact with the 5'-terminal helix region of 16S rRNA. This is Ribosome-binding factor A from Rhizobium etli (strain ATCC 51251 / DSM 11541 / JCM 21823 / NBRC 15573 / CFN 42).